A 292-amino-acid chain; its full sequence is tRNA-cytidine(32) 2-sulfurtransferase (292 aa).

Positions 62–67 (SGGKDS) match the PP-loop motif motif. [4Fe-4S] cluster contacts are provided by cysteine 137, cysteine 140, and cysteine 228.

This sequence belongs to the TtcA family. As to quaternary structure, homodimer. The cofactor is Mg(2+). [4Fe-4S] cluster serves as cofactor.

It localises to the cytoplasm. The catalysed reaction is cytidine(32) in tRNA + S-sulfanyl-L-cysteinyl-[cysteine desulfurase] + AH2 + ATP = 2-thiocytidine(32) in tRNA + L-cysteinyl-[cysteine desulfurase] + A + AMP + diphosphate + H(+). It functions in the pathway tRNA modification. In terms of biological role, catalyzes the ATP-dependent 2-thiolation of cytidine in position 32 of tRNA, to form 2-thiocytidine (s(2)C32). The sulfur atoms are provided by the cysteine/cysteine desulfurase (IscS) system. The chain is tRNA-cytidine(32) 2-sulfurtransferase from Brucella anthropi (strain ATCC 49188 / DSM 6882 / CCUG 24695 / JCM 21032 / LMG 3331 / NBRC 15819 / NCTC 12168 / Alc 37) (Ochrobactrum anthropi).